The primary structure comprises 320 residues: MPMYQVKPYHGGSAPLRVELPTCMYRLPNVHSKTTSPATDAGHVQEPSEPSLRALESRQDDILKRLYELKAAVDGLSKMIHTPDADLDVTNILQADEPTTLTTNALDLNSVLGKDYGALKDIVINANPASPPLSLLVLHRLLCERYRVLSTVHTHSSVKNVPENLLKCFGEQARKQSRHEYQLGFTLIWKNVPKTQMKFSVQTMCPIEGEGNIARFLFSLFGQKHNAVHLTLIDSWVDIAMFQLREGSSKEKAAVFRSMNSALGKSPWLVGNELTVADVVLWSVLQQTGGSSGAAPTNVQRWLKSCENLAPFSTALQLLK.

The tract at residues 31–51 (HSKTTSPATDAGHVQEPSEPS) is disordered. Serine 36 bears the Phosphoserine mark. Positions 82–162 (TPDADLDVTN…HTHSSVKNVP (81 aa)) are interaction with PRKN. An interaction with TP53 region spans residues 162–225 (PENLLKCFGE…FLFSLFGQKH (64 aa)). The GST C-terminal domain occupies 220 to 317 (LFGQKHNAVH…NLAPFSTALQ (98 aa)).

In terms of assembly, part of the multisynthetase complex (MSC), a multisubunit complex that groups tRNA ligases for Arg (RARS1), Asp (DARS1), Gln (QARS1), Ile (IARS1), Leu (LARS1), Lys (KARS1), Met (MARS1) the bifunctional ligase for Glu and Pro (EPRS1) and the auxiliary subunits AIMP1/p43, AIMP2/p38 and EEF1E1/p18. Interacts (via N-terminus) with KARS1. Interacts with EPRS1. Forms a linear complex that contains MARS1, EEF1E1, EPRS1 and AIMP2 that is at the core of the multisubunit complex. Binds FUBP1 (via C-terminus). Interacts in both its unphosphorylated and phosphorylated forms with p53/TP53 (via N-terminus) in the nucleus following UV irradiation. Interacts (via N-terminus) with PRKN/parkin (via first RING-type domain). Interacts with TARS3. Phosphorylated on serine residues in response to UV irradiation. Post-translationally, ubiquitinated by PRKN, leading to its degradation by the proteasome.

The protein resides in the cytoplasm. The protein localises to the cytosol. It localises to the nucleus. Functionally, required for assembly and stability of the aminoacyl-tRNA synthase complex. Mediates ubiquitination and degradation of FUBP1, a transcriptional activator of MYC, leading to MYC down-regulation which is required for aveolar type II cell differentiation. Blocks MDM2-mediated ubiquitination and degradation of p53/TP53. Functions as a proapoptotic factor. In Rattus norvegicus (Rat), this protein is Aminoacyl tRNA synthase complex-interacting multifunctional protein 2 (Aimp2).